The following is a 427-amino-acid chain: Serine--tRNA ligase (427 aa).

Residue 233–235 coordinates L-serine; the sequence is TGE. 264 to 266 contacts ATP; that stretch reads RSE. An L-serine-binding site is contributed by Glu-287. 351 to 354 is an ATP binding site; the sequence is EVSS. Ser-387 is a binding site for L-serine.

It belongs to the class-II aminoacyl-tRNA synthetase family. Type-1 seryl-tRNA synthetase subfamily. As to quaternary structure, homodimer. The tRNA molecule binds across the dimer.

The protein localises to the cytoplasm. The enzyme catalyses tRNA(Ser) + L-serine + ATP = L-seryl-tRNA(Ser) + AMP + diphosphate + H(+). The catalysed reaction is tRNA(Sec) + L-serine + ATP = L-seryl-tRNA(Sec) + AMP + diphosphate + H(+). It participates in aminoacyl-tRNA biosynthesis; selenocysteinyl-tRNA(Sec) biosynthesis; L-seryl-tRNA(Sec) from L-serine and tRNA(Sec): step 1/1. Catalyzes the attachment of serine to tRNA(Ser). Is also able to aminoacylate tRNA(Sec) with serine, to form the misacylated tRNA L-seryl-tRNA(Sec), which will be further converted into selenocysteinyl-tRNA(Sec). The chain is Serine--tRNA ligase from Buchnera aphidicola subsp. Acyrthosiphon pisum (strain 5A).